The chain runs to 397 residues: Lysophospholipid transporter LplT (397 aa).

Residues 1-17 (MSESVHTNTSLWSKGMK) are Periplasmic-facing. A helical transmembrane segment spans residues 18 to 38 (AVIVAQFLSAFGDNALLFATL). Residues 39–52 (ALLKAQFYPEWSQP) lie on the Cytoplasmic side of the membrane. A helical membrane pass occupies residues 53-73 (ILQMVFVGAYILFAPFVGQVA). Residues 74 to 90 (DSFAKGRVMMFANGLKL) are Periplasmic-facing. The helical transmembrane segment at 91-111 (LGAASICFGINPFLGYTLVGV) threads the bilayer. The Cytoplasmic segment spans residues 112-144 (GAAAYSPAKYGILGELTTGSKLVKANGLMEAST). Residues 145–165 (IAAILLGSVAGGVLADWHILV) form a helical membrane-spanning segment. Ala-166 is a topological domain (periplasmic). Residues 167–187 (LVACALAYGGAVVANIYIPKL) traverse the membrane as a helical segment. The Cytoplasmic segment spans residues 188 to 226 (AAARPGQSWNLISMTRSFLNACTSLWRNGETRFSLVGTS). A helical membrane pass occupies residues 227–247 (LFWGAGVTLRFLLVLWVPVAL). At 248–256 (GITDNATPT) the chain is on the periplasmic side. The chain crosses the membrane as a helical span at residues 257-277 (YLNAMVAIGIVVGAGAAAKLV). Residues 278 to 280 (TLE) lie on the Cytoplasmic side of the membrane. Residues 281–301 (TVSRCMPAGILIGVVVLIFSL) traverse the membrane as a helical segment. Residues 302–304 (QHE) are Periplasmic-facing. A helical transmembrane segment spans residues 305–325 (LLPAYALLMLIGVLGGFFVVP). The Cytoplasmic segment spans residues 326 to 343 (LNALLQERGKKSVGAGNA). A helical membrane pass occupies residues 344-364 (IAVQNLGENSAMLLMLGIYSL). The Periplasmic segment spans residues 365–366 (AV). A helical transmembrane segment spans residues 367–387 (MVGIPVVPIGIGFGALFALAI). The Cytoplasmic portion of the chain corresponds to 388–397 (TALWIWQRRH).

This sequence belongs to the major facilitator superfamily. LplT (TC 2.A.1.42) family.

The protein localises to the cell inner membrane. Functionally, catalyzes the facilitated diffusion of 2-acyl-glycero-3-phosphoethanolamine (2-acyl-GPE) into the cell. This is Lysophospholipid transporter LplT from Escherichia coli O81 (strain ED1a).